Here is a 499-residue protein sequence, read N- to C-terminus: Cytochrome P450 71A27 (499 aa).

A helical membrane pass occupies residues 3 to 23 (MILISLCLTTLLAFLFLKPLL). Position 438 (Cys438) interacts with heme.

It belongs to the cytochrome P450 family. Requires heme as cofactor.

The protein resides in the membrane. The chain is Cytochrome P450 71A27 (CYP71A27) from Arabidopsis thaliana (Mouse-ear cress).